Reading from the N-terminus, the 407-residue chain is Ameloblastin (407 aa).

A signal peptide spans 1–26 (MSASKIPLFKMKGLILFLSLVKMSLA). Residue proline 42 is modified to Hydroxyproline. At serine 48 the chain carries Phosphoserine. Disordered regions lie at residues 124–143 (GVQV…PGQL) and 259–304 (QNSP…ENPA).

Belongs to the ameloblastin family. Ameloblast-specific.

The protein localises to the secreted. Its subcellular location is the extracellular space. It localises to the extracellular matrix. Functionally, involved in the mineralization and structural organization of enamel. The protein is Ameloblastin (Ambn) of Mus musculus (Mouse).